Reading from the N-terminus, the 275-residue chain is Peflin (275 aa).

Tandem repeats lie at residues 21-29 (PPGGYYPGP), 31-39 (HGGGQYGSG), 41-49 (PPGGGYGAP), 50-59 (APGGPYGYPS), 60-68 (AGGVPSGTP), 76-84 (PPGGPYGQL), 85-91 (PPGGPYG), and 92-100 (TQPGHYGQG). 2 disordered regions span residues 21–45 (PPGG…PGGG) and 59–103 (SAGG…GGVP). The 8 X 9 AA approximate tandem repeat of [AP]-P-G-G-P-Y-G-G-P-P stretch occupies residues 21–100 (PPGGYYPGPP…GTQPGHYGQG (80 aa)). Residues 31–45 (HGGGQYGSGLPPGGG) are compositionally biased toward gly residues. A compositionally biased stretch (low complexity) spans 59–70 (SAGGVPSGTPSG). 5 consecutive EF-hand domains span residues 105 to 140 (NVDP…SNWS), 146 to 174 (TCLM…WKFL), 172 to 207 (KFLQ…MGYN), 208 to 244 (LSPQ…LQVL), and 245 to 274 (TEAF…ASRM). Ca(2+) contacts are provided by D118, D120, S122, Y124, and E129. Positions 185, 187, 189, 191, and 196 each coordinate Ca(2+). The segment at 195 to 275 (TELQQALSQM…FVTMTASRML (81 aa)) is required for interaction with PDCD6.

Heterodimer; heterodimerizes (via the EF-hand 5) with PDCD6. Dissociates from PDCD6 in presence of calcium. Post-translationally, ubiquitinated by the BCR(KLHL12) E3 ubiquitin ligase complex.

The protein localises to the cytoplasm. The protein resides in the endoplasmic reticulum. It is found in the membrane. It localises to the cytoplasmic vesicle. Its subcellular location is the COPII-coated vesicle membrane. Functionally, calcium-binding protein that acts as an adapter that bridges unrelated proteins or stabilizes weak protein-protein complexes in response to calcium. Together with PDCD6, acts as a calcium-dependent adapter for the BCR(KLHL12) complex, a complex involved in endoplasmic reticulum (ER)-Golgi transport by regulating the size of COPII coats. In response to cytosolic calcium increase, the heterodimer formed with PDCD6 interacts with, and bridges together the BCR(KLHL12) complex and SEC31 (SEC31A or SEC31B), promoting monoubiquitination of SEC31 and subsequent collagen export, which is required for neural crest specification. Its role in the heterodimer formed with PDCD6 is however unclear: some evidence shows that PEF1 and PDCD6 work together and promote association between PDCD6 and SEC31 in presence of calcium. Other reports show that PEF1 dissociates from PDCD6 in presence of calcium, and may act as a negative regulator of PDCD6. Also acts as a negative regulator of ER-Golgi transport; possibly by inhibiting interaction between PDCD6 and SEC31. This chain is Peflin, found in Mus musculus (Mouse).